Consider the following 276-residue polypeptide: Rhamnulose-1-phosphate aldolase (276 aa).

Residue E117 is part of the active site. 3 residues coordinate Zn(2+): H141, H143, and H212.

Belongs to the aldolase class II family. RhaD subfamily. In terms of assembly, homotetramer. Requires Zn(2+) as cofactor.

It is found in the cytoplasm. It catalyses the reaction L-rhamnulose 1-phosphate = (S)-lactaldehyde + dihydroxyacetone phosphate. The protein operates within carbohydrate degradation; L-rhamnose degradation; glycerone phosphate from L-rhamnose: step 3/3. In terms of biological role, catalyzes the reversible cleavage of L-rhamnulose-1-phosphate to dihydroxyacetone phosphate (DHAP) and L-lactaldehyde. The protein is Rhamnulose-1-phosphate aldolase of Klebsiella pneumoniae (strain 342).